Reading from the N-terminus, the 354-residue chain is Guanine nucleotide-binding protein G(i) subunit alpha-3 (354 aa).

The N-myristoyl glycine moiety is linked to residue Gly-2. Cys-3 is lipidated: S-palmitoyl cysteine. The G-alpha domain occupies 32–354 (KEVKLLLLGA…KNNLKECGLY (323 aa)). The interval 35–48 (KLLLLGAGESGKST) is G1 motif. GTP is bound by residues Gly-42, Glu-43, Ser-44, Gly-45, Lys-46, Ser-47, Thr-48, Asp-150, Ser-151, Leu-175, Arg-176, Thr-177, Arg-178, Val-179, Lys-180, Thr-181, Val-201, Gly-203, Asn-269, Lys-270, Asp-272, Leu-273, Cys-325, Ala-326, and Thr-327. Position 47 (Ser-47) interacts with Mg(2+). The interval 173–181 (DVLRTRVKT) is G2 motif. Thr-181 contributes to the Mg(2+) binding site. Residues 196-205 (FKMFDVGGQR) are G3 motif. The interval 265–272 (ILFLNKKD) is G4 motif. The segment at 324 to 329 (TCATDT) is G5 motif.

It belongs to the G-alpha family. G(i/o/t/z) subfamily. Heterotrimeric G proteins are composed of 3 units; alpha, beta and gamma. The alpha subunit contains the guanine nucleotide binding site. GTP binding causes dissociation of the heterotrimer, liberating the individual subunits so that they can interact with downstream effector proteins. Forms a complex with CCDC88A/GIV and EGFR which leads to enhanced EGFR signaling and triggering of cell migration; ligand stimulation is required for recruitment of GNAI3 to the complex. Interacts (inactive GDP-bound form) with CCDC88A/GIV (via GBA motif); the interaction leads to activation of GNAI3. Interacts (inactive GDP-bound form) with CCDC88C/DAPLE (via GBA motif); the interaction leads to activation of GNAI3. Interacts (inactive GDP-bound form) with NUCB1 (via GBA motif) and NUCB2 (via GBA motif); the interaction leads to activation of GNAI3. Interacts (inactive GDP-bound form) with PLCD4 (via GBA motif); the interaction leads to activation of GNAI3. Interacts with INSR; the interaction is probably mediated by CCDC88A/GIV. Interacts with GPSM1. Interacts (GDP-bound form) with GPSM2 (via GoLoco domains). Does not interact with RGS2. Interacts with RGS8 and RGS10; this strongly enhances the intrinsic GTPase activity. Interacts with RGS16; this strongly enhances the intrinsic GTPase activity. Interacts with RGS12. Interacts (via active GTP- or inactive GDP-bound form) with RGS14. Interacts (via active GTP-bound form) with TRPC5 (via ANK repeats) in a homotetrameric ion channel; the interaction is direct and activates the channel activity.

It is found in the cytoplasm. Its subcellular location is the cell membrane. The protein localises to the cytoskeleton. It localises to the microtubule organizing center. The protein resides in the centrosome. In terms of biological role, heterotrimeric guanine nucleotide-binding proteins (G proteins) function as transducers downstream of G protein-coupled receptors (GPCRs) in numerous signaling cascades. The alpha chain contains the guanine nucleotide binding site and alternates between an active, GTP-bound state and an inactive, GDP-bound state. Signaling by an activated GPCR promotes GDP release and GTP binding. The alpha subunit has a low GTPase activity that converts bound GTP to GDP, thereby terminating the signal. Both GDP release and GTP hydrolysis are modulated by numerous regulatory proteins. Signaling is mediated via effector proteins, such as adenylate cyclase. Inhibits adenylate cyclase activity, leading to decreased intracellular cAMP levels. Stimulates the activity of receptor-regulated K(+) channels. The active GTP-bound form prevents the association of RGS14 with centrosomes and is required for the translocation of RGS14 from the cytoplasm to the plasma membrane. May play a role in cell division. The active GTP-bound form activates the calcium permeant TRPC5 ion channels. This is Guanine nucleotide-binding protein G(i) subunit alpha-3 (Gnai3) from Mus musculus (Mouse).